Consider the following 242-residue polypeptide: Ribosomal RNA small subunit methyltransferase G (242 aa).

S-adenosyl-L-methionine-binding positions include Gly-82, Phe-87, 133–134, and Arg-152; that span reads AE.

It belongs to the methyltransferase superfamily. RNA methyltransferase RsmG family.

It localises to the cytoplasm. Specifically methylates the N7 position of a guanine in 16S rRNA. This chain is Ribosomal RNA small subunit methyltransferase G, found in Acetivibrio thermocellus (strain ATCC 27405 / DSM 1237 / JCM 9322 / NBRC 103400 / NCIMB 10682 / NRRL B-4536 / VPI 7372) (Clostridium thermocellum).